The primary structure comprises 145 residues: Class I hydrophobin 1 (145 aa).

An N-terminal signal peptide occupies residues 1-19 (MKFSYAIAAVVAAAASVQA). 4 disulfides stabilise this stretch: Cys65–Cys126, Cys72–Cys120, Cys73–Cys106, and Cys127–Cys140. N-linked (GlcNAc...) asparagine glycans are attached at residues Asn80 and Asn129.

This sequence belongs to the fungal hydrophobin family. As to quaternary structure, self-assembles to form functional amyloid fibrils called rodlets. Self-assembly into fibrillar rodlets occurs spontaneously at hydrophobic:hydrophilic interfaces and the rodlets further associate laterally to form amphipathic monolayers.

The protein resides in the secreted. The protein localises to the cell wall. Aerial growth, conidiation, and dispersal of filamentous fungi in the environment rely upon a capability of their secreting small amphipathic proteins called hydrophobins (HPBs) with low sequence identity. Class I can self-assemble into an outermost layer of rodlet bundles on aerial cell surfaces, conferring cellular hydrophobicity that supports fungal growth, development and dispersal; whereas Class II form highly ordered films at water-air interfaces through intermolecular interactions but contribute nothing to the rodlet structure. Hyd1 is a class I hydrophobin that is crucial for the initiation of primordia formation. Plays also important roles in nitrogen regulation and resistance to abiotic stresses. In Ganoderma lucidum (Ling zhi medicinal fungus), this protein is Class I hydrophobin 1.